The sequence spans 321 residues: Eukaryotic translation initiation factor 3 subunit I (321 aa).

WD repeat units lie at residues 8–47 (GHER…RLGT), 50–89 (GHGG…TLSK), 140–179 (VDNS…KLIS), 182–221 (EHSK…HLKT), and 279–318 (GHFG…DDIE).

Belongs to the eIF-3 subunit I family. In terms of assembly, component of the eukaryotic translation initiation factor 3 (eIF-3) complex.

It localises to the cytoplasm. Component of the eukaryotic translation initiation factor 3 (eIF-3) complex, which is involved in protein synthesis of a specialized repertoire of mRNAs and, together with other initiation factors, stimulates binding of mRNA and methionyl-tRNAi to the 40S ribosome. The eIF-3 complex specifically targets and initiates translation of a subset of mRNAs involved in cell proliferation. The sequence is that of Eukaryotic translation initiation factor 3 subunit I from Nematostella vectensis (Starlet sea anemone).